Consider the following 607-residue polypeptide: Guanine nucleotide-binding protein-like 1 (607 aa).

Residues 1 to 14 (MPRKKPFSVKQKKK) show a composition bias toward basic residues. The interval 1-81 (MPRKKPFSVK…GPRGYDPNRY (81 aa)) is disordered. A compositionally biased stretch (basic and acidic residues) spans 15–26 (QLQDKRERKRGL). Phosphoserine is present on residues serine 32, serine 33, and serine 34. Threonine 48 and threonine 50 each carry phosphothreonine. Serine 51 and serine 68 each carry phosphoserine. The region spanning 178–418 (WRQLWRVLEM…LCDCPGLIFP (241 aa)) is the CP-type G domain. 225–228 (NKVD) is a binding site for GTP. Serine 324 carries the phosphoserine modification. GTP-binding positions include 367-374 (GFPNVGKS) and 411-415 (DCPGL). Residues 544–607 (GRVGPAGDEE…PYALLGEGEC (64 aa)) form a disordered region. The span at 550-585 (GDEEEEEEEELSSSCEEEGEEDRDADEEGEGDEDTP) shows a compositional bias: acidic residues. A phosphoserine mark is found at serine 561, serine 562, and serine 563.

The protein belongs to the TRAFAC class YlqF/YawG GTPase family.

Possible regulatory or functional link with the histocompatibility cluster. This Rattus norvegicus (Rat) protein is Guanine nucleotide-binding protein-like 1 (Gnl1).